The primary structure comprises 322 residues: Triosephosphate isomerase, chloroplastic (322 aa).

Residues 1–67 (MAVVSTSLAS…RRCPRGVVAM (67 aa)) constitute a chloroplast transit peptide. Substrate contacts are provided by asparagine 78 and lysine 80. The active-site Electrophile is the histidine 162. Catalysis depends on glutamate 232, which acts as the Proton acceptor.

It belongs to the triosephosphate isomerase family. Homodimer.

It localises to the plastid. It is found in the chloroplast. It catalyses the reaction D-glyceraldehyde 3-phosphate = dihydroxyacetone phosphate. The protein operates within carbohydrate biosynthesis; Calvin cycle. The polypeptide is Triosephosphate isomerase, chloroplastic (TPIP1) (Spinacia oleracea (Spinach)).